The primary structure comprises 289 residues: LysM and putative peptidoglycan-binding domain-containing protein 4 (289 aa).

Residues 1–23 (MRLREGPTHSFQPPSSVHSSLGS) form a disordered region. Topologically, residues 1 to 208 (MRLREGPTHS…PASGADWGIR (208 aa)) are extracellular. Residues 9–23 (HSFQPPSSVHSSLGS) are compositionally biased toward polar residues. N-linked (GlcNAc...) asparagine glycosylation is found at Asn-30 and Asn-59. Positions 71-115 (LERAITEDDNLNKLALQYGCKVSDIKRVNNLITDQDIYALKTIKI) constitute a LysM domain. N-linked (GlcNAc...) asparagine glycosylation is found at Asn-134 and Asn-178. Residues 209–229 (WWNAVFIMLLVGIVLPVFYIV) traverse the membrane as a helical segment. Residues 230 to 289 (YFKTQGDSEGTFSIEGRTNVSTSLSPHTNTGHSMEQMTQRTSGFSPGLLQDTHKLLNPGG) are Cytoplasmic-facing. The disordered stretch occupies residues 252 to 272 (SLSPHTNTGHSMEQMTQRTSG).

The protein resides in the membrane. The protein is LysM and putative peptidoglycan-binding domain-containing protein 4 (lysmd4) of Xenopus laevis (African clawed frog).